A 316-amino-acid polypeptide reads, in one-letter code: 4-hydroxy-3-methylbut-2-enyl diphosphate reductase (316 aa).

Cysteine 12 is a binding site for [4Fe-4S] cluster. (2E)-4-hydroxy-3-methylbut-2-enyl diphosphate contacts are provided by histidine 43 and histidine 81. Dimethylallyl diphosphate contacts are provided by histidine 43 and histidine 81. Isopentenyl diphosphate is bound by residues histidine 43 and histidine 81. A [4Fe-4S] cluster-binding site is contributed by cysteine 103. Position 131 (histidine 131) interacts with (2E)-4-hydroxy-3-methylbut-2-enyl diphosphate. Histidine 131 provides a ligand contact to dimethylallyl diphosphate. Histidine 131 lines the isopentenyl diphosphate pocket. Glutamate 133 functions as the Proton donor in the catalytic mechanism. Threonine 170 contributes to the (2E)-4-hydroxy-3-methylbut-2-enyl diphosphate binding site. Cysteine 198 contacts [4Fe-4S] cluster. The (2E)-4-hydroxy-3-methylbut-2-enyl diphosphate site is built by serine 226, asparagine 228, and serine 271. Residues serine 226, asparagine 228, and serine 271 each coordinate dimethylallyl diphosphate. Isopentenyl diphosphate-binding residues include serine 226, asparagine 228, and serine 271.

Belongs to the IspH family. [4Fe-4S] cluster serves as cofactor.

It carries out the reaction isopentenyl diphosphate + 2 oxidized [2Fe-2S]-[ferredoxin] + H2O = (2E)-4-hydroxy-3-methylbut-2-enyl diphosphate + 2 reduced [2Fe-2S]-[ferredoxin] + 2 H(+). The enzyme catalyses dimethylallyl diphosphate + 2 oxidized [2Fe-2S]-[ferredoxin] + H2O = (2E)-4-hydroxy-3-methylbut-2-enyl diphosphate + 2 reduced [2Fe-2S]-[ferredoxin] + 2 H(+). Its pathway is isoprenoid biosynthesis; dimethylallyl diphosphate biosynthesis; dimethylallyl diphosphate from (2E)-4-hydroxy-3-methylbutenyl diphosphate: step 1/1. It functions in the pathway isoprenoid biosynthesis; isopentenyl diphosphate biosynthesis via DXP pathway; isopentenyl diphosphate from 1-deoxy-D-xylulose 5-phosphate: step 6/6. Its function is as follows. Catalyzes the conversion of 1-hydroxy-2-methyl-2-(E)-butenyl 4-diphosphate (HMBPP) into a mixture of isopentenyl diphosphate (IPP) and dimethylallyl diphosphate (DMAPP). Acts in the terminal step of the DOXP/MEP pathway for isoprenoid precursor biosynthesis. This is 4-hydroxy-3-methylbut-2-enyl diphosphate reductase from Bacillus mycoides (strain KBAB4) (Bacillus weihenstephanensis).